A 144-amino-acid polypeptide reads, in one-letter code: Cytochrome c oxidase subunit 4 isoform 1, mitochondrial (144 aa).

Residues 1 to 73 lie on the Mitochondrial matrix side of the membrane; the sequence is SVVKSEDYTL…SFAEMNRGSN (73 aa). At lysine 4 the chain carries N6-acetyllysine; alternate. At lysine 4 the chain carries N6-succinyllysine; alternate. 2 positions are modified to phosphoserine: serine 31 and serine 33. Lysine 35 carries the N6-acetyllysine; alternate modification. The residue at position 35 (lysine 35) is an N6-succinyllysine; alternate. Position 42 is an N6-acetyllysine (lysine 42). Residues 74 to 99 traverse the membrane as a helical segment; it reads EWKTVVGAAMFFIGFTAILIMLEKRY. Residues 100-144 lie on the Mitochondrial intermembrane side of the membrane; sequence VYGPLPHTFDKEWVAMQTKRMLDLKVNPVDGLASKWDYEKKEWKK.

It belongs to the cytochrome c oxidase IV family. As to quaternary structure, component of the cytochrome c oxidase (complex IV, CIV), a multisubunit enzyme composed of 14 subunits. The complex is composed of a catalytic core of 3 subunits MT-CO1, MT-CO2 and MT-CO3, encoded in the mitochondrial DNA, and 11 supernumerary subunits COX4I, COX5A, COX5B, COX6A, COX6B, COX6C, COX7A, COX7B, COX7C, COX8 and NDUFA4, which are encoded in the nuclear genome. The complex exists as a monomer or a dimer and forms supercomplexes (SCs) in the inner mitochondrial membrane with NADH-ubiquinone oxidoreductase (complex I, CI) and ubiquinol-cytochrome c oxidoreductase (cytochrome b-c1 complex, complex III, CIII), resulting in different assemblies (supercomplex SCI(1)III(2)IV(1) and megacomplex MCI(2)III(2)IV(2)). Interacts with PHB2; the interaction decreases in absence of SPHK2. Interacts with AFG1L. Interacts with ABCB7; this interaction allows the regulation of cellular iron homeostasis and cellular reactive oxygen species (ROS) levels in cardiomyocytes. Interacts with FLVCR2; this interaction occurs in the absence of heme and is disrupted upon heme binding. Interacts with IRGC.

The protein resides in the mitochondrion inner membrane. Its pathway is energy metabolism; oxidative phosphorylation. Its function is as follows. Component of the cytochrome c oxidase, the last enzyme in the mitochondrial electron transport chain which drives oxidative phosphorylation. The respiratory chain contains 3 multisubunit complexes succinate dehydrogenase (complex II, CII), ubiquinol-cytochrome c oxidoreductase (cytochrome b-c1 complex, complex III, CIII) and cytochrome c oxidase (complex IV, CIV), that cooperate to transfer electrons derived from NADH and succinate to molecular oxygen, creating an electrochemical gradient over the inner membrane that drives transmembrane transport and the ATP synthase. Cytochrome c oxidase is the component of the respiratory chain that catalyzes the reduction of oxygen to water. Electrons originating from reduced cytochrome c in the intermembrane space (IMS) are transferred via the dinuclear copper A center (CU(A)) of subunit 2 and heme A of subunit 1 to the active site in subunit 1, a binuclear center (BNC) formed by heme A3 and copper B (CU(B)). The BNC reduces molecular oxygen to 2 water molecules using 4 electrons from cytochrome c in the IMS and 4 protons from the mitochondrial matrix. The polypeptide is Cytochrome c oxidase subunit 4 isoform 1, mitochondrial (COX4I1) (Pithecia pithecia (White-faced saki)).